The chain runs to 226 residues: Ribonuclease HII (226 aa).

One can recognise an RNase H type-2 domain in the interval 29-220; that stretch reads GPVAGVDEAG…VAALLHRVDN (192 aa). 3 residues coordinate a divalent metal cation: Asp-35, Glu-36, and Asp-129.

This sequence belongs to the RNase HII family. The cofactor is Mn(2+). It depends on Mg(2+) as a cofactor.

The protein resides in the cytoplasm. The catalysed reaction is Endonucleolytic cleavage to 5'-phosphomonoester.. Its function is as follows. Endonuclease that specifically degrades the RNA of RNA-DNA hybrids. This chain is Ribonuclease HII, found in Rhodococcus opacus (strain B4).